Reading from the N-terminus, the 348-residue chain is tRNA N6-adenosine threonylcarbamoyltransferase (348 aa).

Histidine 118 and histidine 122 together coordinate Fe cation. Substrate contacts are provided by residues 140–144 (LVSGG), aspartate 173, glycine 186, aspartate 190, and asparagine 279. Aspartate 309 contacts Fe cation.

Belongs to the KAE1 / TsaD family. Fe(2+) is required as a cofactor.

The protein localises to the cytoplasm. It catalyses the reaction L-threonylcarbamoyladenylate + adenosine(37) in tRNA = N(6)-L-threonylcarbamoyladenosine(37) in tRNA + AMP + H(+). Its function is as follows. Required for the formation of a threonylcarbamoyl group on adenosine at position 37 (t(6)A37) in tRNAs that read codons beginning with adenine. Is involved in the transfer of the threonylcarbamoyl moiety of threonylcarbamoyl-AMP (TC-AMP) to the N6 group of A37, together with TsaE and TsaB. TsaD likely plays a direct catalytic role in this reaction. This chain is tRNA N6-adenosine threonylcarbamoyltransferase, found in Lactiplantibacillus plantarum (strain ATCC BAA-793 / NCIMB 8826 / WCFS1) (Lactobacillus plantarum).